The sequence spans 367 residues: Cyclin-dependent kinase 5 activator 2 (367 aa).

Residues 1–11 (MGTVLSLSPAS) show a composition bias toward polar residues. Disordered stretches follow at residues 1 to 56 (MGTV…RLKR), 72 to 98 (ASAK…LVQQ), 131 to 175 (AAAT…GSPR), and 329 to 367 (GEAA…NLDR). A lipid anchor (N-myristoyl glycine) is attached at Gly2. The span at 74 to 84 (AKKKKGSKKVT) shows a compositional bias: basic residues. Thr84 carries the post-translational modification Phosphothreonine. A compositionally biased stretch (low complexity) spans 131–148 (AAATCEPPSGGSAAAQPP). The segment covering 154-171 (KPPPPPPPAPQVAPPVPG) has biased composition (pro residues). The segment covering 342–357 (GAPAASSAARDSCAAG) has biased composition (low complexity).

It belongs to the cyclin-dependent kinase 5 activator family. As to quaternary structure, heterodimer of a catalytic subunit and a regulatory subunit. In terms of processing, myristoylated. The Gly-2-Ala mutant is absent of the cell periphery, suggesting that a proper myristoylation signal is essential for the proper distribution of CDK5R2 (p39). In terms of tissue distribution, brain and neuron specific.

The protein resides in the cell membrane. Its function is as follows. Activator of CDK5/TPKII. This chain is Cyclin-dependent kinase 5 activator 2 (CDK5R2), found in Homo sapiens (Human).